A 156-amino-acid chain; its full sequence is ATP synthase subunit b (156 aa).

The chain crosses the membrane as a helical span at residues 5–25; sequence LTLIGQAIAFAFFVAFCMKFV.

The protein belongs to the ATPase B chain family. In terms of assembly, F-type ATPases have 2 components, F(1) - the catalytic core - and F(0) - the membrane proton channel. F(1) has five subunits: alpha(3), beta(3), gamma(1), delta(1), epsilon(1). F(0) has three main subunits: a(1), b(2) and c(10-14). The alpha and beta chains form an alternating ring which encloses part of the gamma chain. F(1) is attached to F(0) by a central stalk formed by the gamma and epsilon chains, while a peripheral stalk is formed by the delta and b chains.

Its subcellular location is the cell inner membrane. Its function is as follows. F(1)F(0) ATP synthase produces ATP from ADP in the presence of a proton or sodium gradient. F-type ATPases consist of two structural domains, F(1) containing the extramembraneous catalytic core and F(0) containing the membrane proton channel, linked together by a central stalk and a peripheral stalk. During catalysis, ATP synthesis in the catalytic domain of F(1) is coupled via a rotary mechanism of the central stalk subunits to proton translocation. Functionally, component of the F(0) channel, it forms part of the peripheral stalk, linking F(1) to F(0). This is ATP synthase subunit b from Acinetobacter baumannii (strain SDF).